Reading from the N-terminus, the 73-residue chain is UPF0154 protein LGAS_0795 (73 aa).

A helical membrane pass occupies residues 3-23; the sequence is LGLAIFLIIIALLIGLVGGFY.

The protein belongs to the UPF0154 family.

It localises to the cell membrane. The sequence is that of UPF0154 protein LGAS_0795 from Lactobacillus gasseri (strain ATCC 33323 / DSM 20243 / BCRC 14619 / CIP 102991 / JCM 1131 / KCTC 3163 / NCIMB 11718 / NCTC 13722 / AM63).